Here is a 261-residue protein sequence, read N- to C-terminus: Fructoselysine 6-kinase (261 aa).

Belongs to the carbohydrate kinase PfkB family. In terms of assembly, monomer.

It catalyses the reaction N(6)-(D-fructosyl)-L-lysine + ATP = N(6)-(6-phospho-D-fructosyl)-L-lysine + ADP + H(+). It functions in the pathway carbohydrate metabolism; fructoselysine degradation; D-glucose 6-phosphate and lysine from fructoselysine: step 1/2. In terms of biological role, catalyzes the ATP-dependent phosphorylation of fructoselysine to fructoselysine 6-phosphate. May function in a fructoselysine degradation pathway that allows S.flexneri to grow on fructoselysine or psicoselysine. The polypeptide is Fructoselysine 6-kinase (frlD) (Shigella flexneri).